The chain runs to 149 residues: MHCPFCCAVDTKVIDSRLVGEGSSVRRRRQCVVCHERFTTFEVAELVMPRVVKSNDVREPFNEDKLRSGLMKALEKRPVSSDAVENAISHIKSKLRATGEREVASKSIGSLVMDELKKLDKVAYIRFASVYRSFEDIREFGEEIARLQD.

Residues 3-34 (CPFCCAVDTKVIDSRLVGEGSSVRRRRQCVVC) fold into a zinc finger. In terms of domain architecture, ATP-cone spans 49–139 (PRVVKSNDVR…VYRSFEDIRE (91 aa)).

This sequence belongs to the NrdR family. Zn(2+) is required as a cofactor.

Negatively regulates transcription of bacterial ribonucleotide reductase nrd genes and operons by binding to NrdR-boxes. The protein is Transcriptional repressor NrdR of Erwinia tasmaniensis (strain DSM 17950 / CFBP 7177 / CIP 109463 / NCPPB 4357 / Et1/99).